Here is a 635-residue protein sequence, read N- to C-terminus: Threonine--tRNA ligase (635 aa).

The TGS domain occupies 1-61 (MPIITLPDGN…EKDANIAIIT (61 aa)). Positions 242-533 (DHRKIGKQLD…LTEEYAGVYP (292 aa)) are catalytic. Zn(2+) is bound by residues Cys-333, His-384, and His-510.

The protein belongs to the class-II aminoacyl-tRNA synthetase family. Homodimer. Zn(2+) is required as a cofactor.

The protein localises to the cytoplasm. It catalyses the reaction tRNA(Thr) + L-threonine + ATP = L-threonyl-tRNA(Thr) + AMP + diphosphate + H(+). Catalyzes the attachment of threonine to tRNA(Thr) in a two-step reaction: L-threonine is first activated by ATP to form Thr-AMP and then transferred to the acceptor end of tRNA(Thr). Also edits incorrectly charged L-seryl-tRNA(Thr). The chain is Threonine--tRNA ligase from Psychromonas ingrahamii (strain DSM 17664 / CCUG 51855 / 37).